The sequence spans 88 residues: Small ribosomal subunit protein uS17 (88 aa).

It belongs to the universal ribosomal protein uS17 family. In terms of assembly, part of the 30S ribosomal subunit.

One of the primary rRNA binding proteins, it binds specifically to the 5'-end of 16S ribosomal RNA. This chain is Small ribosomal subunit protein uS17, found in Brevibacillus brevis (strain 47 / JCM 6285 / NBRC 100599).